The primary structure comprises 295 residues: Tyrosine recombinase XerC (295 aa).

Positions 1 to 85 (MLTALNRYWD…ALRRFLSFLV (85 aa)) constitute a Core-binding (CB) domain. The region spanning 106-285 (HLPKNMDGEQ…NFQHLAEVYD (180 aa)) is the Tyr recombinase domain. Catalysis depends on residues Arg-145, Lys-169, His-237, Arg-240, and His-263. The O-(3'-phospho-DNA)-tyrosine intermediate role is filled by Tyr-272.

This sequence belongs to the 'phage' integrase family. XerC subfamily. Forms a cyclic heterotetrameric complex composed of two molecules of XerC and two molecules of XerD.

The protein localises to the cytoplasm. Site-specific tyrosine recombinase, which acts by catalyzing the cutting and rejoining of the recombining DNA molecules. The XerC-XerD complex is essential to convert dimers of the bacterial chromosome into monomers to permit their segregation at cell division. It also contributes to the segregational stability of plasmids. The polypeptide is Tyrosine recombinase XerC (Haemophilus influenzae (strain PittEE)).